The sequence spans 131 residues: D-ribose pyranase (131 aa).

His20 acts as the Proton donor in catalysis. Substrate-binding positions include Asp28, His98, and 120 to 122 (YAN).

The protein belongs to the RbsD / FucU family. RbsD subfamily. In terms of assembly, homodecamer.

It is found in the cytoplasm. It catalyses the reaction beta-D-ribopyranose = beta-D-ribofuranose. It functions in the pathway carbohydrate metabolism; D-ribose degradation; D-ribose 5-phosphate from beta-D-ribopyranose: step 1/2. In terms of biological role, catalyzes the interconversion of beta-pyran and beta-furan forms of D-ribose. The polypeptide is D-ribose pyranase (Laribacter hongkongensis (strain HLHK9)).